Consider the following 217-residue polypeptide: Thiamine-phosphate synthase (217 aa).

4-amino-2-methyl-5-(diphosphooxymethyl)pyrimidine-binding positions include glutamine 42–lysine 46 and aspartate 77. 2 residues coordinate Mg(2+): aspartate 78 and aspartate 97. 4-amino-2-methyl-5-(diphosphooxymethyl)pyrimidine is bound at residue serine 116. Threonine 143 to serine 145 provides a ligand contact to 2-[(2R,5Z)-2-carboxy-4-methylthiazol-5(2H)-ylidene]ethyl phosphate. Lysine 146 serves as a coordination point for 4-amino-2-methyl-5-(diphosphooxymethyl)pyrimidine. 2-[(2R,5Z)-2-carboxy-4-methylthiazol-5(2H)-ylidene]ethyl phosphate-binding positions include glycine 174 and isoleucine 194–serine 195.

Belongs to the thiamine-phosphate synthase family. Mg(2+) serves as cofactor.

The catalysed reaction is 2-[(2R,5Z)-2-carboxy-4-methylthiazol-5(2H)-ylidene]ethyl phosphate + 4-amino-2-methyl-5-(diphosphooxymethyl)pyrimidine + 2 H(+) = thiamine phosphate + CO2 + diphosphate. It catalyses the reaction 2-(2-carboxy-4-methylthiazol-5-yl)ethyl phosphate + 4-amino-2-methyl-5-(diphosphooxymethyl)pyrimidine + 2 H(+) = thiamine phosphate + CO2 + diphosphate. The enzyme catalyses 4-methyl-5-(2-phosphooxyethyl)-thiazole + 4-amino-2-methyl-5-(diphosphooxymethyl)pyrimidine + H(+) = thiamine phosphate + diphosphate. It participates in cofactor biosynthesis; thiamine diphosphate biosynthesis; thiamine phosphate from 4-amino-2-methyl-5-diphosphomethylpyrimidine and 4-methyl-5-(2-phosphoethyl)-thiazole: step 1/1. Its function is as follows. Condenses 4-methyl-5-(beta-hydroxyethyl)thiazole monophosphate (THZ-P) and 2-methyl-4-amino-5-hydroxymethyl pyrimidine pyrophosphate (HMP-PP) to form thiamine monophosphate (TMP). This chain is Thiamine-phosphate synthase, found in Lactiplantibacillus plantarum (strain ATCC BAA-793 / NCIMB 8826 / WCFS1) (Lactobacillus plantarum).